Here is a 281-residue protein sequence, read N- to C-terminus: LC-AMP precursor 3 (281 aa).

Positions 1-19 are cleaved as a signal peptide; that stretch reads MKYTIIPFLLLVALTCATA. Residues 20-56 constitute a propeptide that is removed on maturation; sequence RSIDGSEKEVQEIREETPSSNEDVPFSLSANEDEEAR. At L74 the chain carries Leucine amide. Positions 75–89 are excised as a propeptide; it reads GREESLSANEDEEAR. At S114 the chain carries Serine amide. Residues 115–129 constitute a propeptide that is removed on maturation; it reads GREESFSANEDEEER. Residue L147 is modified to Leucine amide. Residues 148 to 162 constitute a propeptide that is removed on maturation; that stretch reads GREESISANEDEETR. L180 bears the Leucine amide mark. A propeptide spanning residues 181-195 is cleaved from the precursor; that stretch reads GREESLSAIEDEEAR. Residue L213 is modified to Leucine amide. Residues 214–228 constitute a propeptide that is removed on maturation; that stretch reads GREESLSANEDEEAR. L246 is modified (leucine amide). The propeptide occupies 247-261; it reads GREESLSANEDEEAR. L279 carries the leucine amide modification.

In terms of tissue distribution, expressed by the venom gland.

Its subcellular location is the secreted. Functionally, antimicrobial peptide that acts by influencing bacterial cell membrane permeability at low concentrations and by directly disrupting structure-function at high concentrations. Shows activity against Gram-negative bacteria (S.typhimurium CGMCC 1.1174 (MIC=2.5 uM), E.coli CCTCC AB 2018675 (MIC=5 uM), S.dysenteriae CGMCC 1.1869 (MIC=2.5 uM), P.aeruginosa CGMCC 1.596 (MIC 5-10 uM), K.pneumoniae (MIC=10 uM), A.baumannii (MIC=5-10 uM)), and Gram-positive bacteria (S.aureus CMCC 26003 or MRSA ATCC 43300 (MIC=5 uM), and E.faecium (MIC=2.5-5 uM)). Inhibits biofilm formation of E.coli and S.aureus in a dose-dependent manner and disrupts established biofilms. Demonstrates minimal bacterial resistance, excellent stability, negligible mammalian cell toxicity, low hemolytic activity, and appropriate selectivity for both normal and tumor cells. When combined with traditional antibiotics, exhibits additive or synergistic therapeutic effects. In vivo, in a neutropenic mouse thigh infection model, exhibits a therapeutic effect in inhibiting bacterial proliferation. The sequence is that of LC-AMP precursor 3 from Lycosa coelestis (Wolf spider).